Consider the following 231-residue polypeptide: U1 small nuclear ribonucleoprotein C-1 (231 aa).

A Matrin-type zinc finger spans residues 4-36 (YYCDYCDTYLTHDSPSVRKQHNAGYKHKANVRT). Pro residues-rich tracts occupy residues 117–127 (APGIPGYPGGP), 134–159 (GAPPGSMPQPGAPPGSMPQPGAPPGS), and 167–178 (LPRPPTLPPPTS). Positions 117-231 (APGIPGYPGG…SYAQPSEGNH (115 aa)) are disordered. Residues 181–193 (PGAPIPNSAAPPA) show a composition bias toward low complexity. Positions 199–217 (PPAPAGPTSGAPPAPPTAP) are enriched in pro residues.

This sequence belongs to the U1 small nuclear ribonucleoprotein C family. In terms of assembly, U1 snRNP is composed of the 7 core Sm proteins B/B', D1, D2, D3, E, F and G that assemble in a heptameric protein ring on the Sm site of the small nuclear RNA to form the core snRNP, and at least 3 U1 snRNP-specific proteins U1-70K, U1-A and U1-C. U1-C interacts with U1 snRNA and the 5' splice-site region of the pre-mRNA.

The protein resides in the nucleus. Functionally, component of the spliceosomal U1 snRNP, which is essential for recognition of the pre-mRNA 5' splice-site and the subsequent assembly of the spliceosome. U1-C is directly involved in initial 5' splice-site recognition for both constitutive and regulated alternative splicing. The interaction with the 5' splice-site seems to precede base-pairing between the pre-mRNA and the U1 snRNA. Stimulates commitment or early (E) complex formation by stabilizing the base pairing of the 5' end of the U1 snRNA and the 5' splice-site region. The polypeptide is U1 small nuclear ribonucleoprotein C-1 (Sorghum bicolor (Sorghum)).